Here is a 113-residue protein sequence, read N- to C-terminus: uncharacterized protein (113 aa).

An SWIM-type zinc finger spans residues phenylalanine 49–isoleucine 91.

This is an uncharacterized protein from Archaeoglobus fulgidus (strain ATCC 49558 / DSM 4304 / JCM 9628 / NBRC 100126 / VC-16).